A 417-amino-acid chain; its full sequence is Multifunctional CCA protein (417 aa).

ATP contacts are provided by Gly8 and Arg11. CTP-binding residues include Gly8 and Arg11. 2 residues coordinate Mg(2+): Asp21 and Asp23. Arg91, Arg137, and Arg140 together coordinate ATP. CTP-binding residues include Arg91, Arg137, and Arg140. Residues 225-326 (SGIHTLMTLQ…LNVLKKTDAF (102 aa)) form the HD domain.

This sequence belongs to the tRNA nucleotidyltransferase/poly(A) polymerase family. Bacterial CCA-adding enzyme type 1 subfamily. Monomer. Can also form homodimers and oligomers. Mg(2+) is required as a cofactor. Requires Ni(2+) as cofactor.

The catalysed reaction is a tRNA precursor + 2 CTP + ATP = a tRNA with a 3' CCA end + 3 diphosphate. The enzyme catalyses a tRNA with a 3' CCA end + 2 CTP + ATP = a tRNA with a 3' CCACCA end + 3 diphosphate. Its function is as follows. Catalyzes the addition and repair of the essential 3'-terminal CCA sequence in tRNAs without using a nucleic acid template. Adds these three nucleotides in the order of C, C, and A to the tRNA nucleotide-73, using CTP and ATP as substrates and producing inorganic pyrophosphate. tRNA 3'-terminal CCA addition is required both for tRNA processing and repair. Also involved in tRNA surveillance by mediating tandem CCA addition to generate a CCACCA at the 3' terminus of unstable tRNAs. While stable tRNAs receive only 3'-terminal CCA, unstable tRNAs are marked with CCACCA and rapidly degraded. In Neisseria meningitidis serogroup B (strain ATCC BAA-335 / MC58), this protein is Multifunctional CCA protein.